The sequence spans 288 residues: 33 kDa chaperonin (288 aa).

Cystine bridges form between cysteine 235/cysteine 237 and cysteine 268/cysteine 271.

Belongs to the HSP33 family. Post-translationally, under oxidizing conditions two disulfide bonds are formed involving the reactive cysteines. Under reducing conditions zinc is bound to the reactive cysteines and the protein is inactive.

Its subcellular location is the cytoplasm. In terms of biological role, redox regulated molecular chaperone. Protects both thermally unfolding and oxidatively damaged proteins from irreversible aggregation. Plays an important role in the bacterial defense system toward oxidative stress. The polypeptide is 33 kDa chaperonin (Streptococcus suis (strain 98HAH33)).